Here is a 1123-residue protein sequence, read N- to C-terminus: Leucine-rich repeat receptor-like protein kinase PEPR1 (1123 aa).

The N-terminal stretch at M1–C28 is a signal peptide. Topologically, residues L29–Q769 are extracellular. An LRR 1 repeat occupies S31–T53. N-linked (GlcNAc...) asparagine glycans are attached at residues N57, N81, N110, and N121. LRR repeat units follow at residues S74–L98, K99–C122, K124–S145, L146–I170, P171–A194, E196–S218, and S219–G243. N-linked (GlcNAc...) asparagine glycosylation is found at N182 and N217. Residues N244, N252, N289, N302, N316, N321, and N337 are each glycosylated (N-linked (GlcNAc...) asparagine). LRR repeat units follow at residues L245 to C266, K267 to C290, S292 to L314, K315 to C338, S340 to L362, R363 to S386, S388 to M410, K412 to N434, S435 to G458, R459 to C482, T484 to D505, H506 to C529, K530 to L553, Q554 to C577, S579 to N600, W601 to L625, K626 to E650, L652 to L674, I675 to G696, and L697 to Q721. N398, N420, and N434 each carry an N-linked (GlcNAc...) asparagine glycan. An N-linked (GlcNAc...) asparagine glycan is attached at N494. N-linked (GlcNAc...) asparagine glycans are attached at residues N531, N536, N560, N591, and N597. N-linked (GlcNAc...) asparagine glycosylation is found at N681 and N686. N745 carries N-linked (GlcNAc...) asparagine glycosylation. A helical transmembrane segment spans residues I770–F790. Residues I791 to R1123 are Cytoplasmic-facing. At T824 the chain carries Phosphothreonine. In terms of domain architecture, Protein kinase spans L827 to R1115. Residues I833–V841 and K855 contribute to the ATP site. Phosphotyrosine occurs at positions 901 and 941. The Proton acceptor role is filled by D954. At Y995 the chain carries Phosphotyrosine.

This sequence belongs to the protein kinase superfamily. Ser/Thr protein kinase family. Interacts with PEP1 and BAK1. Interacts with BIK1 and PBL1. In terms of processing, N-glycosylated.

Its subcellular location is the cell membrane. It catalyses the reaction L-seryl-[protein] + ATP = O-phospho-L-seryl-[protein] + ADP + H(+). The enzyme catalyses L-threonyl-[protein] + ATP = O-phospho-L-threonyl-[protein] + ADP + H(+). Functionally, acts as a receptor for PEP defense peptides. Unlike typical immune receptors, senses an endogenous elicitor that potentiates pathogen-associated molecular pattern (PAMP)-inducible plant responses. Involved in PAMP-triggered immunity (PTI) signaling. Interacts with and phosphorylates the kinase BIK1, a central rate-limiting kinase in PTI signaling. The chain is Leucine-rich repeat receptor-like protein kinase PEPR1 (PEPR1) from Arabidopsis thaliana (Mouse-ear cress).